The primary structure comprises 284 residues: D-tagatose-1,6-bisphosphate aldolase subunit GatY (284 aa).

Asp82 (proton donor) is an active-site residue. Zn(2+)-binding residues include His83 and His180. Gly181 serves as a coordination point for dihydroxyacetone phosphate. His208 is a binding site for Zn(2+). Dihydroxyacetone phosphate is bound by residues 209–211 and 230–233; these read GAS and NVAT.

The protein belongs to the class II fructose-bisphosphate aldolase family. TagBP aldolase GatY subfamily. As to quaternary structure, forms a complex with GatZ. It depends on Zn(2+) as a cofactor.

It catalyses the reaction D-tagatofuranose 1,6-bisphosphate = D-glyceraldehyde 3-phosphate + dihydroxyacetone phosphate. Its pathway is carbohydrate metabolism; D-tagatose 6-phosphate degradation; D-glyceraldehyde 3-phosphate and glycerone phosphate from D-tagatose 6-phosphate: step 2/2. Catalytic subunit of the tagatose-1,6-bisphosphate aldolase GatYZ, which catalyzes the reversible aldol condensation of dihydroxyacetone phosphate (DHAP or glycerone-phosphate) with glyceraldehyde 3-phosphate (G3P) to produce tagatose 1,6-bisphosphate (TBP). Requires GatZ subunit for full activity and stability. Is involved in the catabolism of galactitol. The chain is D-tagatose-1,6-bisphosphate aldolase subunit GatY from Escherichia coli (strain K12 / MC4100 / BW2952).